The primary structure comprises 646 residues: EF-hand calcium-binding domain-containing protein 6 (646 aa).

6 consecutive EF-hand domains span residues 1–27, 28–63, 109–144, 214–249, 321–356, and 357–392; these read FLETDNEGNGILRRRDIKNALYGFDIP, LTPREFEKLWASYDTEGKGHITYQEFLQKLGVNYSP, DCYQDISKAFTKIDKSKTNYISICKMQKVLEECGCS, SSQLALSTAFSALDKEDTGFVKSTEFGQVLKDFCHK, SHYHAITQEFENFDTMKTNTISREEFRAVCNRNVQI, and LTDEQFDRLWNEMPVNAKGRLKYPDFLSRFSSERAA. At T29 the chain carries Phosphothreonine. The interval 390–452 is disordered; sequence RAATPTATGD…TTAIPGTPPL (63 aa). Positions 432–446 are enriched in polar residues; the sequence is KPQSHPCTAASTTAI. At S435 the chain carries Phosphoserine. A phosphothreonine mark is found at T439 and T449. The interval 448-646 is interaction with PARK7; it reads GTPPLQNCDP…YNDFLRAFLQ (199 aa). EF-hand domains follow at residues 468 to 503, 504 to 539, 579 to 614, and 615 to 646; these read GCWRQLLKECKEKDVARQGDISASEFLALVEKFNLD, ISKEECQQLIIKYDLKNNGKFAYCDFIQSCVLLLKA, HCWRPMRRTFKSYDEAGTGLLSVADFRTVLRQYSIN, and LSEEEFFHILEYYDKTLSSNISYNDFLRAFLQ. An interaction with AR region spans residues 552–646; that stretch reads NAHKMKDSGA…YNDFLRAFLQ (95 aa).

Microtubule inner protein component of sperm flagellar doublet microtubules. Binds PARK7. Part of a ternary complex containing PARK7, EFCAB6/DJBP and AR.

The protein resides in the nucleus. It is found in the cytoplasm. Its subcellular location is the cytoskeleton. The protein localises to the flagellum axoneme. Functionally, negatively regulates the androgen receptor by recruiting histone deacetylase complex, and protein DJ-1 antagonizes this inhibition by abrogation of this complex. Microtubule inner protein (MIP) part of the dynein-decorated doublet microtubules (DMTs) in cilia axoneme, which is required for motile cilia beating. The chain is EF-hand calcium-binding domain-containing protein 6 (EFCAB6) from Macaca fascicularis (Crab-eating macaque).